We begin with the raw amino-acid sequence, 239 residues long: Phosphoribosylaminoimidazole-succinocarboxamide synthase (239 aa).

This sequence belongs to the SAICAR synthetase family.

It carries out the reaction 5-amino-1-(5-phospho-D-ribosyl)imidazole-4-carboxylate + L-aspartate + ATP = (2S)-2-[5-amino-1-(5-phospho-beta-D-ribosyl)imidazole-4-carboxamido]succinate + ADP + phosphate + 2 H(+). It functions in the pathway purine metabolism; IMP biosynthesis via de novo pathway; 5-amino-1-(5-phospho-D-ribosyl)imidazole-4-carboxamide from 5-amino-1-(5-phospho-D-ribosyl)imidazole-4-carboxylate: step 1/2. This is Phosphoribosylaminoimidazole-succinocarboxamide synthase from Acinetobacter baumannii (strain AB307-0294).